The following is a 270-amino-acid chain: tRNA pseudouridine synthase A (270 aa).

D60 acts as the Nucleophile in catalysis. The tract at residues 107 to 111 (FHARF) is RNA binding. Position 118 (Y118) interacts with substrate. Residues 168 to 172 (QCQSR) form an interaction with tRNA region.

The protein belongs to the tRNA pseudouridine synthase TruA family. In terms of assembly, homodimer.

The enzyme catalyses uridine(38/39/40) in tRNA = pseudouridine(38/39/40) in tRNA. Formation of pseudouridine at positions 38, 39 and 40 in the anticodon stem and loop of transfer RNAs. This chain is tRNA pseudouridine synthase A, found in Shigella boydii serotype 18 (strain CDC 3083-94 / BS512).